The following is a 211-amino-acid chain: Protein-L-isoaspartate O-methyltransferase (211 aa).

Serine 62 is an active-site residue.

The protein belongs to the methyltransferase superfamily. L-isoaspartyl/D-aspartyl protein methyltransferase family.

The protein resides in the cytoplasm. It carries out the reaction [protein]-L-isoaspartate + S-adenosyl-L-methionine = [protein]-L-isoaspartate alpha-methyl ester + S-adenosyl-L-homocysteine. Its function is as follows. Catalyzes the methyl esterification of L-isoaspartyl residues in peptides and proteins that result from spontaneous decomposition of normal L-aspartyl and L-asparaginyl residues. It plays a role in the repair and/or degradation of damaged proteins. In Shewanella halifaxensis (strain HAW-EB4), this protein is Protein-L-isoaspartate O-methyltransferase.